A 266-amino-acid polypeptide reads, in one-letter code: Undecaprenyl-diphosphatase (266 aa).

8 consecutive transmembrane segments (helical) span residues 4 to 24 (ILRVIILGFVQGISEFLPISS), 39 to 59 (LPIVFDIYLHFATVLVVIIYY), 88 to 108 (LNLILLILIITFFTALIGIFI), 114 to 134 (LFTFKLVLFNFIVTSILLFLI), 147 to 167 (IFFSGLLIGIMQGIGAMPGIS), 186 to 206 (SLEISFLSLIPIVFGSLFLKY), 214 to 234 (IIFNIFEINLGAIFAFIFGLF), and 246 to 266 (SKLYYFSIYLVSVVSLVYFLV).

Belongs to the UppP family.

It is found in the cell inner membrane. The enzyme catalyses di-trans,octa-cis-undecaprenyl diphosphate + H2O = di-trans,octa-cis-undecaprenyl phosphate + phosphate + H(+). Catalyzes the dephosphorylation of undecaprenyl diphosphate (UPP). Confers resistance to bacitracin. This Borrelia recurrentis (strain A1) protein is Undecaprenyl-diphosphatase.